A 480-amino-acid chain; its full sequence is Glycogen synthase (480 aa).

Residue Lys-15 participates in ADP-alpha-D-glucose binding.

It belongs to the glycosyltransferase 1 family. Bacterial/plant glycogen synthase subfamily.

The enzyme catalyses [(1-&gt;4)-alpha-D-glucosyl](n) + ADP-alpha-D-glucose = [(1-&gt;4)-alpha-D-glucosyl](n+1) + ADP + H(+). The protein operates within glycan biosynthesis; glycogen biosynthesis. Functionally, synthesizes alpha-1,4-glucan chains using ADP-glucose. The sequence is that of Glycogen synthase from Opitutus terrae (strain DSM 11246 / JCM 15787 / PB90-1).